The sequence spans 87 residues: U3-theraphotoxin-Hhn1a 18 (87 aa).

Positions Met1–Ala24 are cleaved as a signal peptide. A propeptide spanning residues Ser25–Arg52 is cleaved from the precursor. Intrachain disulfides connect Cys54/Cys67, Cys61/Cys72, and Cys66/Cys79.

This sequence belongs to the neurotoxin 10 (Hwtx-1) family. 51 (Hntx-8) subfamily. Hntx-8 sub-subfamily. As to expression, expressed by the venom gland.

It localises to the secreted. In terms of biological role, ion channel inhibitor. This is U3-theraphotoxin-Hhn1a 18 from Cyriopagopus hainanus (Chinese bird spider).